A 239-amino-acid chain; its full sequence is MRGILIAIEGINGVGKSTQAMRLKKALECMDYNAVCIRFPNPDTTTGDLILQVLNKMIEMSSEQLHKLFTKHCSEFVAEIAALLKLNFIVIVDRYIWSGLAYAQADGITIETKNTFKPDYTFFLSSKKPLNEKPLTLQRLFETKEKQETIFTNFTIIMNDVPKNRLCTIPATLNKEIIHTMILTKTIKVFDNNSCLNYIKMYDDKYLNVQELNLFDFEWQKCIEDNNDKEEYDDDDFIV.

10 to 17 (GINGVGKS) lines the ATP pocket.

It belongs to the thymidylate kinase family.

The catalysed reaction is dTMP + ATP = dTDP + ADP. It participates in pyrimidine metabolism; dTTP biosynthesis. In terms of biological role, catalyzes the conversion of dTMP to dTDP. The chain is Thymidylate kinase (TMK) from African swine fever virus (isolate Warthog/Namibia/Wart80/1980) (ASFV).